A 357-amino-acid polypeptide reads, in one-letter code: Sulfate/thiosulfate import ATP-binding protein CysA (357 aa).

One can recognise an ABC transporter domain in the interval 3–237 (IVIQNVSKSF…PKSPFVYDFL (235 aa)). An ATP-binding site is contributed by 35-42 (GPSGSGKT).

Belongs to the ABC transporter superfamily. Sulfate/tungstate importer (TC 3.A.1.6) family. In terms of assembly, the complex is composed of two ATP-binding proteins (CysA), two transmembrane proteins (CysT and CysW) and a solute-binding protein (CysP).

It is found in the cell membrane. The enzyme catalyses sulfate(out) + ATP + H2O = sulfate(in) + ADP + phosphate + H(+). It carries out the reaction thiosulfate(out) + ATP + H2O = thiosulfate(in) + ADP + phosphate + H(+). Its function is as follows. Part of the ABC transporter complex CysAWTP involved in sulfate/thiosulfate import. Responsible for energy coupling to the transport system. This Halalkalibacterium halodurans (strain ATCC BAA-125 / DSM 18197 / FERM 7344 / JCM 9153 / C-125) (Bacillus halodurans) protein is Sulfate/thiosulfate import ATP-binding protein CysA.